Here is a 170-residue protein sequence, read N- to C-terminus: Zinc finger protein 576 (170 aa).

Residues 1 to 29 (MEDPNPEENMKQQDSPKERSPQSPGGNIC) are disordered. The segment covering 8-20 (ENMKQQDSPKERS) has biased composition (basic and acidic residues). C2H2-type zinc fingers lie at residues 34–57 (PKCT…KREH), 71–93 (FICF…QRSH), 112–134 (FPCP…RQMH), and 143–165 (FACT…YIRH).

Belongs to the krueppel C2H2-type zinc-finger protein family.

It is found in the nucleus. In terms of biological role, may be involved in transcriptional regulation. This Homo sapiens (Human) protein is Zinc finger protein 576 (ZNF576).